A 264-amino-acid polypeptide reads, in one-letter code: S-adenosylmethionine decarboxylase proenzyme (264 aa).

Serine 113 serves as the catalytic Schiff-base intermediate with substrate; via pyruvic acid. Pyruvic acid (Ser); by autocatalysis is present on serine 113. Histidine 118 functions as the Proton acceptor; for processing activity in the catalytic mechanism. The active-site Proton donor; for catalytic activity is the cysteine 141.

Belongs to the prokaryotic AdoMetDC family. Type 2 subfamily. In terms of assembly, heterooctamer of four alpha and four beta chains arranged as a tetramer of alpha/beta heterodimers. Requires pyruvate as cofactor. In terms of processing, is synthesized initially as an inactive proenzyme. Formation of the active enzyme involves a self-maturation process in which the active site pyruvoyl group is generated from an internal serine residue via an autocatalytic post-translational modification. Two non-identical subunits are generated from the proenzyme in this reaction, and the pyruvate is formed at the N-terminus of the alpha chain, which is derived from the carboxyl end of the proenzyme. The post-translation cleavage follows an unusual pathway, termed non-hydrolytic serinolysis, in which the side chain hydroxyl group of the serine supplies its oxygen atom to form the C-terminus of the beta chain, while the remainder of the serine residue undergoes an oxidative deamination to produce ammonia and the pyruvoyl group blocking the N-terminus of the alpha chain.

It carries out the reaction S-adenosyl-L-methionine + H(+) = S-adenosyl 3-(methylsulfanyl)propylamine + CO2. It participates in amine and polyamine biosynthesis; S-adenosylmethioninamine biosynthesis; S-adenosylmethioninamine from S-adenosyl-L-methionine: step 1/1. Catalyzes the decarboxylation of S-adenosylmethionine to S-adenosylmethioninamine (dcAdoMet), the propylamine donor required for the synthesis of the polyamines spermine and spermidine from the diamine putrescine. The chain is S-adenosylmethionine decarboxylase proenzyme from Xylella fastidiosa (strain Temecula1 / ATCC 700964).